We begin with the raw amino-acid sequence, 424 residues long: Delta(14)-sterol reductase erg24 (424 aa).

Helical transmembrane passes span 19–39 (IGAL…FYIC) and 112–132 (LILG…MEFI). NADP(+) contacts are provided by residues Lys317, Arg321, Leu344, Trp349, and 356–357 (NY). A helical membrane pass occupies residues 370–390 (PAGFGSPIPYFYVAYFGVLLV). NADP(+) is bound by residues Asp396, 400–404 (CRVKY), and Tyr411.

It belongs to the ERG4/ERG24 family.

Its subcellular location is the endoplasmic reticulum membrane. It carries out the reaction 4,4-dimethyl-5alpha-cholesta-8,24-dien-3beta-ol + NADP(+) = 4,4-dimethyl-5alpha-cholesta-8,14,24-trien-3beta-ol + NADPH + H(+). It participates in steroid biosynthesis; zymosterol biosynthesis; zymosterol from lanosterol: step 2/6. Its pathway is steroid metabolism; ergosterol biosynthesis. Its function is as follows. Delta(14)-sterol reductase; part of the third module of ergosterol biosynthesis pathway that includes by the late steps of the pathway. Erg24 reduces the C14=C15 double bond of 4,4-dimethyl-cholesta-8,14,24-trienol to produce 4,4-dimethyl-cholesta-8,24-dienol. The third module or late pathway involves the ergosterol synthesis itself through consecutive reactions that mainly occur in the endoplasmic reticulum (ER) membrane. Firstly, the squalene synthase erg9 catalyzes the condensation of 2 farnesyl pyrophosphate moieties to form squalene, which is the precursor of all steroids. Secondly, squalene is converted into lanosterol by the consecutive action of the squalene epoxidase erg1 and the lanosterol synthase erg7. The lanosterol 14-alpha-demethylase erg11/cyp1 catalyzes C14-demethylation of lanosterol to produce 4,4'-dimethyl cholesta-8,14,24-triene-3-beta-ol. In the next steps, a complex process involving various demethylation, reduction and desaturation reactions catalyzed by the C-14 reductase erg24 and the C-4 demethylation complex erg25-erg26-erg27 leads to the production of zymosterol. Erg28 likely functions in the C-4 demethylation complex reaction by tethering erg26 and Erg27 to the endoplasmic reticulum or to facilitate interaction between these proteins. Then, the sterol 24-C-methyltransferase erg6 catalyzes the methyl transfer from S-adenosyl-methionine to the C-24 of zymosterol to form fecosterol. The C-8 sterol isomerase erg2 catalyzes the reaction which results in unsaturation at C-7 in the B ring of sterols and thus converts fecosterol to episterol. The sterol-C5-desaturases erg31 and erg32 then catalyze the introduction of a C-5 double bond in the B ring to produce 5-dehydroepisterol. The C-22 sterol desaturase erg5 further converts 5-dehydroepisterol into ergosta-5,7,22,24(28)-tetraen-3beta-ol by forming the C-22(23) double bond in the sterol side chain. Finally, ergosta-5,7,22,24(28)-tetraen-3beta-ol is substrate of the C-24(28) sterol reductase erg4 to produce ergosterol. In the genus Schizosaccharomyces, a second route exists between lanosterol and fecosterol, via the methylation of lanosterol to eburicol by erg6, followed by C14-demethylation by erg11/cyp1 and C4-demethylation by the demethylation complex erg25-erg26-erg27. This is Delta(14)-sterol reductase erg24 from Schizosaccharomyces pombe (strain 972 / ATCC 24843) (Fission yeast).